Reading from the N-terminus, the 106-residue chain is UPF0060 membrane protein Smed_0659 (106 aa).

The next 3 helical transmembrane spans lie at 4-24 (FAIY…FWAW), 31-51 (GLWL…LTMV), and 61-81 (AAYG…AEGA).

Belongs to the UPF0060 family.

The protein localises to the cell inner membrane. This is UPF0060 membrane protein Smed_0659 from Sinorhizobium medicae (strain WSM419) (Ensifer medicae).